The following is a 121-amino-acid chain: Small ribosomal subunit protein uS12 (121 aa).

Residues 1–25 are disordered; the sequence is MPTINQLVRKNRKQKKSQSKSPVLE. Basic residues predominate over residues 9–18; sequence RKNRKQKKSQ. 3-methylthioaspartic acid is present on aspartate 89.

Belongs to the universal ribosomal protein uS12 family. As to quaternary structure, part of the 30S ribosomal subunit. Contacts proteins S8 and S17. May interact with IF1 in the 30S initiation complex.

With S4 and S5 plays an important role in translational accuracy. In terms of biological role, interacts with and stabilizes bases of the 16S rRNA that are involved in tRNA selection in the A site and with the mRNA backbone. Located at the interface of the 30S and 50S subunits, it traverses the body of the 30S subunit contacting proteins on the other side and probably holding the rRNA structure together. The combined cluster of proteins S8, S12 and S17 appears to hold together the shoulder and platform of the 30S subunit. This Rhodopirellula baltica (strain DSM 10527 / NCIMB 13988 / SH1) protein is Small ribosomal subunit protein uS12.